Consider the following 487-residue polypeptide: UDP-glycosyltransferase 85A7 (487 aa).

Residues 364-366 (CPQ), 381-389 (HCGWNSTLE), and 403-406 (FSEQ) contribute to the UDP-alpha-D-glucose site.

Belongs to the UDP-glycosyltransferase family. Expressed in roots, shoots, leaves and flowers.

The polypeptide is UDP-glycosyltransferase 85A7 (UGT85A7) (Arabidopsis thaliana (Mouse-ear cress)).